A 430-amino-acid chain; its full sequence is Histidine--tRNA ligase (430 aa).

It belongs to the class-II aminoacyl-tRNA synthetase family.

It localises to the cytoplasm. It carries out the reaction tRNA(His) + L-histidine + ATP = L-histidyl-tRNA(His) + AMP + diphosphate + H(+). The chain is Histidine--tRNA ligase from Metallosphaera sedula (strain ATCC 51363 / DSM 5348 / JCM 9185 / NBRC 15509 / TH2).